Reading from the N-terminus, the 527-residue chain is Anthranilate synthase component 1 1 (527 aa).

Position 52 (Ser52) interacts with L-tryptophan. The interval Ala53–Glu72 is disordered. Position 298–300 (Pro298–Met300) interacts with L-tryptophan. Gly333 to Thr334 serves as a coordination point for chorismate. A Mg(2+)-binding site is contributed by Glu360. Chorismate-binding positions include Tyr448, Arg468, Gly486–Gly488, and Gly488. Glu501 provides a ligand contact to Mg(2+).

Belongs to the anthranilate synthase component I family. In terms of assembly, tetramer of two components I and two components II. Requires Mg(2+) as cofactor.

It carries out the reaction chorismate + L-glutamine = anthranilate + pyruvate + L-glutamate + H(+). It participates in amino-acid biosynthesis; L-tryptophan biosynthesis; L-tryptophan from chorismate: step 1/5. This is Anthranilate synthase component 1 1 (trpE1) from Halobacterium salinarum (strain ATCC 700922 / JCM 11081 / NRC-1) (Halobacterium halobium).